A 145-amino-acid chain; its full sequence is Ribosome maturation factor RimP (145 aa).

It belongs to the RimP family.

It is found in the cytoplasm. Functionally, required for maturation of 30S ribosomal subunits. The chain is Ribosome maturation factor RimP from Borreliella burgdorferi (strain ATCC 35210 / DSM 4680 / CIP 102532 / B31) (Borrelia burgdorferi).